The sequence spans 93 residues: Zinc metalloproteinase-disintegrin-like leucurogin (93 aa).

The Disintegrin domain maps to 8–93 (PPVCGNELLE…SECPADVGHK (86 aa)). 6 residues coordinate Ca(2+): Val10, Asn13, Leu15, Glu17, Glu20, and Asp23. 7 cysteine pairs are disulfide-bonded: Cys11–Cys40, Cys22–Cys35, Cys24–Cys30, Cys34–Cys57, Cys48–Cys54, Cys53–Cys79, and Cys66–Cys86. The short motif at 72-74 (ECD) is the D/ECD-tripeptide element. Asp74, Pro75, Glu77, Asp89, and Val90 together coordinate Ca(2+). Positions 74–93 (DPAEHCTGQSSECPADVGHK) are disordered.

The protein belongs to the venom metalloproteinase (M12B) family. P-III subfamily. In terms of assembly, monomer. Zn(2+) serves as cofactor. In terms of processing, N-glycosylated. In terms of tissue distribution, expressed by the venom gland.

The protein localises to the secreted. Snake venom zinc metalloprotease that possesses hemorrhagic activity. The disintegrin-like domain has been expressed and named leucurogin. This recombinant disintegrin is able to inhibit collagen-induced platelet aggregation but not ADP- or arachidonic acid-induced platelet aggregation. Furthermore, it inhibits the adhesion of human fibroblasts to collagen type I. It also reduces adhesion and migration of human fibroblasts and inhibits migration and proliferation of human and mouse melanoma cell lines (BLM, and B16-F10-Nex2). In vitro, it inhibits the vascular structures formation by endothelial cells. In addition, it inhibits the growth of experimental Ehrlich tumor and has anti-angiogenesis effect on the sponge implant model. In vivo, when intraperitoneally injected into mice, it inhibits lung metastasis of B16F10 Nex-2 cells. In the treatment of human melanoma, grafted intradermally in the nude mice flank, it inhibits tumor growth. The protein is Zinc metalloproteinase-disintegrin-like leucurogin of Bothrops leucurus (Whitetail lancehead).